The chain runs to 700 residues: pH-response regulator protein palI/prr-5 (700 aa).

Topologically, residues 1–8 (MLRPATPL) are cytoplasmic. The helical transmembrane segment at 9–29 (AVLLFAAFGLLTLATISTPII) threads the bilayer. Over 30-90 (KQIPLSSFEI…PRATRSTLSS (61 aa)) the chain is Extracellular. A helical transmembrane segment spans residues 91–111 (ILIVHPVAALITLINFVLAIV). The Cytoplasmic portion of the chain corresponds to 112–123 (AHFHSPSHSARY). A helical transmembrane segment spans residues 124 to 144 (LLILFIVSFVDFIVCLLCFLV). Residues 145–152 (DVLLFIPH) lie on the Extracellular side of the membrane. The chain crosses the membrane as a helical span at residues 153–173 (LSWGSYIVVAATILVAFCGLV). The Cytoplasmic portion of the chain corresponds to 174-700 (TCAMRRTLVN…GNMPRAAGPR (527 aa)). 3 disordered regions span residues 226–491 (SGAN…GIRD), 507–560 (VPDP…PISE), and 573–700 (DVDP…AGPR). The span at 234-252 (KLPEFTTFEKKDDRSEERI) shows a compositional bias: basic and acidic residues. Gly residues predominate over residues 320 to 378 (GRGGMPPGGYRGRGGFPGPGRGGGPPQNGRGGYGPPGRGRGGYGPPPRGYGGPGPRGGR). Residues 414-424 (SPYANRQQSPG) are compositionally biased toward polar residues. 2 stretches are compositionally biased toward polar residues: residues 593 to 603 (SMQSPPASNSY) and 615 to 637 (ESENSNFTSISQRGINPRWNSAN). Low complexity predominate over residues 657 to 671 (VVPRRPVNRPGAGPA).

Belongs to the palI/RIM9 family.

The protein resides in the cell membrane. Its function is as follows. Required for the proteolytic cleavage of the transcription factor pacc-1 in response to alkaline ambient pH. In Neurospora crassa (strain ATCC 24698 / 74-OR23-1A / CBS 708.71 / DSM 1257 / FGSC 987), this protein is pH-response regulator protein palI/prr-5 (prr-5).